Reading from the N-terminus, the 69-residue chain is MMPGPFELIIILVIVLLLFGGKRLKDIGGDLGNAIKGFKKAMKESTDSINNKDDIVEAKIIKKEIKQEK.

A helical membrane pass occupies residues 1–21 (MMPGPFELIIILVIVLLLFGG).

This sequence belongs to the TatA/E family. In terms of assembly, the Tat system comprises two distinct complexes: a TatABC complex, containing multiple copies of TatA, TatB and TatC subunits, and a separate TatA complex, containing only TatA subunits. Substrates initially bind to the TatABC complex, which probably triggers association of the separate TatA complex to form the active translocon.

The protein resides in the cell inner membrane. Its function is as follows. Part of the twin-arginine translocation (Tat) system that transports large folded proteins containing a characteristic twin-arginine motif in their signal peptide across membranes. TatA could form the protein-conducting channel of the Tat system. This Vesicomyosocius okutanii subsp. Calyptogena okutanii (strain HA) protein is Sec-independent protein translocase protein TatA.